The following is a 353-amino-acid chain: tRNA-specific 2-thiouridylase MnmA 2 (353 aa).

ATP is bound by residues 9–16 and Met35; that span reads AMSGGVDS. Catalysis depends on Cys98, which acts as the Nucleophile. Cys98 and Cys194 form a disulfide bridge. Residue Gly122 participates in ATP binding. The tract at residues 144-146 is interaction with tRNA; sequence KDQ. Residue Cys194 is the Cysteine persulfide intermediate of the active site. The interval 300-301 is interaction with tRNA; the sequence is RY.

The protein belongs to the MnmA/TRMU family.

The protein localises to the cytoplasm. The enzyme catalyses S-sulfanyl-L-cysteinyl-[protein] + uridine(34) in tRNA + AH2 + ATP = 2-thiouridine(34) in tRNA + L-cysteinyl-[protein] + A + AMP + diphosphate + H(+). Catalyzes the 2-thiolation of uridine at the wobble position (U34) of tRNA, leading to the formation of s(2)U34. This is tRNA-specific 2-thiouridylase MnmA 2 from Clostridium botulinum (strain Langeland / NCTC 10281 / Type F).